Consider the following 123-residue polypeptide: Large ribosomal subunit protein uL14 (123 aa).

This sequence belongs to the universal ribosomal protein uL14 family. Part of the 50S ribosomal subunit. Forms a cluster with proteins L3 and L19. In the 70S ribosome, L14 and L19 interact and together make contacts with the 16S rRNA in bridges B5 and B8.

Its function is as follows. Binds to 23S rRNA. Forms part of two intersubunit bridges in the 70S ribosome. The polypeptide is Large ribosomal subunit protein uL14 (Hamiltonella defensa subsp. Acyrthosiphon pisum (strain 5AT)).